We begin with the raw amino-acid sequence, 441 residues long: Glutamate--tRNA ligase 2 (441 aa).

A 'HIGH' region motif is present at residues 9-19 (PSPTGYIHVGN). A 'KMSKS' region motif is present at residues 239-243 (ALSKR). Lys242 lines the ATP pocket.

This sequence belongs to the class-I aminoacyl-tRNA synthetase family. Glutamate--tRNA ligase type 1 subfamily. As to quaternary structure, monomer.

It is found in the cytoplasm. The catalysed reaction is tRNA(Glu) + L-glutamate + ATP = L-glutamyl-tRNA(Glu) + AMP + diphosphate. Catalyzes the attachment of glutamate to tRNA(Glu) in a two-step reaction: glutamate is first activated by ATP to form Glu-AMP and then transferred to the acceptor end of tRNA(Glu). In Cereibacter sphaeroides (strain ATCC 17029 / ATH 2.4.9) (Rhodobacter sphaeroides), this protein is Glutamate--tRNA ligase 2.